The primary structure comprises 200 residues: Pyridoxine/pyridoxamine 5'-phosphate oxidase (200 aa).

FMN contacts are provided by residues 48–53 (RMVLLK), 63–64 (YT), Lys-70, and Gln-92. Substrate is bound at residue Lys-53. Tyr-110, Arg-114, and Ser-118 together coordinate substrate. FMN-binding positions include 127 to 128 (QS) and Trp-171. 177–179 (RLH) serves as a coordination point for substrate. Residue Arg-181 coordinates FMN.

This sequence belongs to the pyridoxamine 5'-phosphate oxidase family. As to quaternary structure, homodimer. The cofactor is FMN.

It carries out the reaction pyridoxamine 5'-phosphate + O2 + H2O = pyridoxal 5'-phosphate + H2O2 + NH4(+). The catalysed reaction is pyridoxine 5'-phosphate + O2 = pyridoxal 5'-phosphate + H2O2. It participates in cofactor metabolism; pyridoxal 5'-phosphate salvage; pyridoxal 5'-phosphate from pyridoxamine 5'-phosphate: step 1/1. It functions in the pathway cofactor metabolism; pyridoxal 5'-phosphate salvage; pyridoxal 5'-phosphate from pyridoxine 5'-phosphate: step 1/1. Catalyzes the oxidation of either pyridoxine 5'-phosphate (PNP) or pyridoxamine 5'-phosphate (PMP) into pyridoxal 5'-phosphate (PLP). In Cereibacter sphaeroides (strain ATCC 17023 / DSM 158 / JCM 6121 / CCUG 31486 / LMG 2827 / NBRC 12203 / NCIMB 8253 / ATH 2.4.1.) (Rhodobacter sphaeroides), this protein is Pyridoxine/pyridoxamine 5'-phosphate oxidase.